We begin with the raw amino-acid sequence, 334 residues long: Fructose-1,6-bisphosphatase class 1 (334 aa).

Mg(2+) is bound by residues Glu89, Asp112, Leu114, and Asp115. Substrate is bound by residues 115 to 118 (DGSS), Asn208, Tyr241, and Lys271. Glu277 provides a ligand contact to Mg(2+).

This sequence belongs to the FBPase class 1 family. In terms of assembly, homotetramer. Mg(2+) serves as cofactor.

The protein resides in the cytoplasm. It carries out the reaction beta-D-fructose 1,6-bisphosphate + H2O = beta-D-fructose 6-phosphate + phosphate. It participates in carbohydrate biosynthesis; gluconeogenesis. The polypeptide is Fructose-1,6-bisphosphatase class 1 (Serratia proteamaculans (strain 568)).